We begin with the raw amino-acid sequence, 140 residues long: Nucleoside diphosphate kinase (140 aa).

ATP contacts are provided by lysine 11, phenylalanine 59, arginine 87, threonine 93, arginine 104, and asparagine 114. Histidine 117 acts as the Pros-phosphohistidine intermediate in catalysis.

Belongs to the NDK family. As to quaternary structure, homotetramer. The cofactor is Mg(2+).

The protein resides in the cytoplasm. The enzyme catalyses a 2'-deoxyribonucleoside 5'-diphosphate + ATP = a 2'-deoxyribonucleoside 5'-triphosphate + ADP. The catalysed reaction is a ribonucleoside 5'-diphosphate + ATP = a ribonucleoside 5'-triphosphate + ADP. Functionally, major role in the synthesis of nucleoside triphosphates other than ATP. The ATP gamma phosphate is transferred to the NDP beta phosphate via a ping-pong mechanism, using a phosphorylated active-site intermediate. The sequence is that of Nucleoside diphosphate kinase from Brucella canis (strain ATCC 23365 / NCTC 10854 / RM-666).